The sequence spans 400 residues: Acetate kinase (400 aa).

Asn-10 is a Mg(2+) binding site. Lys-17 lines the ATP pocket. Arg-91 serves as a coordination point for substrate. Asp-150 serves as the catalytic Proton donor/acceptor. Residues 210–214 (HLGNG), 285–287 (DCR), and 333–337 (GIGEN) each bind ATP. Glu-387 serves as a coordination point for Mg(2+).

Belongs to the acetokinase family. Homodimer. Mg(2+) serves as cofactor. Mn(2+) is required as a cofactor.

It is found in the cytoplasm. The enzyme catalyses acetate + ATP = acetyl phosphate + ADP. It functions in the pathway metabolic intermediate biosynthesis; acetyl-CoA biosynthesis; acetyl-CoA from acetate: step 1/2. Its function is as follows. Catalyzes the formation of acetyl phosphate from acetate and ATP. Can also catalyze the reverse reaction. This chain is Acetate kinase, found in Yersinia pseudotuberculosis serotype I (strain IP32953).